We begin with the raw amino-acid sequence, 148 residues long: Cytochrome c-type biogenesis protein CcmE (148 aa).

Residues 1–7 (MKPRNRR) lie on the Cytoplasmic side of the membrane. A helical; Signal-anchor for type II membrane protein transmembrane segment spans residues 8-28 (IALIVAGLSALGIATALVLNA). Topologically, residues 29–148 (FQSNLVFFFT…VQKKPASRKP (120 aa)) are periplasmic. Residues H123 and Y127 each coordinate heme. A disordered region spans residues 128 to 148 (MPPEAQHALDEVQKKPASRKP).

The protein belongs to the CcmE/CycJ family.

The protein resides in the cell inner membrane. Heme chaperone required for the biogenesis of c-type cytochromes. Transiently binds heme delivered by CcmC and transfers the heme to apo-cytochromes in a process facilitated by CcmF and CcmH. This is Cytochrome c-type biogenesis protein CcmE from Pseudomonas aeruginosa.